A 361-amino-acid polypeptide reads, in one-letter code: Queuine tRNA-ribosyltransferase (361 aa).

Aspartate 92 serves as the catalytic Proton acceptor. Substrate-binding positions include 92 to 96 (DSGGF), aspartate 146, glutamine 189, and glycine 216. Residues 247-253 (GVGKPAD) are RNA binding. The active-site Nucleophile is aspartate 266. An RNA binding; important for wobble base 34 recognition region spans residues 271–275 (TRSGR). Residues cysteine 304, cysteine 306, cysteine 309, and histidine 335 each contribute to the Zn(2+) site.

This sequence belongs to the queuine tRNA-ribosyltransferase family. In terms of assembly, homodimer. Within each dimer, one monomer is responsible for RNA recognition and catalysis, while the other monomer binds to the replacement base PreQ1. The cofactor is Zn(2+).

The enzyme catalyses 7-aminomethyl-7-carbaguanine + guanosine(34) in tRNA = 7-aminomethyl-7-carbaguanosine(34) in tRNA + guanine. Its pathway is tRNA modification; tRNA-queuosine biosynthesis. Catalyzes the base-exchange of a guanine (G) residue with the queuine precursor 7-aminomethyl-7-deazaguanine (PreQ1) at position 34 (anticodon wobble position) in tRNAs with GU(N) anticodons (tRNA-Asp, -Asn, -His and -Tyr). Catalysis occurs through a double-displacement mechanism. The nucleophile active site attacks the C1' of nucleotide 34 to detach the guanine base from the RNA, forming a covalent enzyme-RNA intermediate. The proton acceptor active site deprotonates the incoming PreQ1, allowing a nucleophilic attack on the C1' of the ribose to form the product. After dissociation, two additional enzymatic reactions on the tRNA convert PreQ1 to queuine (Q), resulting in the hypermodified nucleoside queuosine (7-(((4,5-cis-dihydroxy-2-cyclopenten-1-yl)amino)methyl)-7-deazaguanosine). This Rickettsia canadensis (strain McKiel) protein is Queuine tRNA-ribosyltransferase.